The sequence spans 139 residues: Large ribosomal subunit protein uL16 (139 aa).

The segment covering 1-20 has biased composition (basic residues); it reads MLIPRRVKHRKQHHPKRRGQ. Residues 1–25 are disordered; sequence MLIPRRVKHRKQHHPKRRGQAKGGT.

Belongs to the universal ribosomal protein uL16 family. As to quaternary structure, part of the 50S ribosomal subunit.

Its function is as follows. Binds 23S rRNA and is also seen to make contacts with the A and possibly P site tRNAs. In Streptomyces avermitilis (strain ATCC 31267 / DSM 46492 / JCM 5070 / NBRC 14893 / NCIMB 12804 / NRRL 8165 / MA-4680), this protein is Large ribosomal subunit protein uL16.